Reading from the N-terminus, the 197-residue chain is MLLGGKDKKGSLFIVSAPAGTGKTTLVNLLVQEFPTVIASISYTTRAPRLGEVNGKDYYFITESEFEAKIAAADFLEYVKLYDTYYGTSREWVEIQRQLGLHVILVIDTQGALQLQKLCEATFIFIRPPSLDELKNRLINRQTESLEMIEKRLACAERELEAAQYYDYEIINDDLQEAYQVLRSILIAEYHRISKKL.

A Guanylate kinase-like domain is found at 10–187 (GSLFIVSAPA…AYQVLRSILI (178 aa)). 17 to 24 (APAGTGKT) is a binding site for ATP.

It belongs to the guanylate kinase family.

It is found in the cytoplasm. The enzyme catalyses GMP + ATP = GDP + ADP. Its function is as follows. Essential for recycling GMP and indirectly, cGMP. This Protochlamydia amoebophila (strain UWE25) protein is Guanylate kinase.